The following is a 305-amino-acid chain: Ribonuclease BN (305 aa).

Zn(2+) is bound by residues histidine 64, histidine 66, aspartate 68, histidine 69, histidine 141, aspartate 212, and histidine 270. The Proton acceptor role is filled by aspartate 68.

This sequence belongs to the RNase Z family. RNase BN subfamily. As to quaternary structure, homodimer. Zn(2+) serves as cofactor.

Its function is as follows. Zinc phosphodiesterase, which has both exoribonuclease and endoribonuclease activities. This Escherichia coli O157:H7 protein is Ribonuclease BN.